Reading from the N-terminus, the 507-residue chain is Light-independent protochlorophyllide reductase subunit B (507 aa).

D36 lines the [4Fe-4S] cluster pocket. Catalysis depends on D293, which acts as the Proton donor. 428 to 429 (GM) provides a ligand contact to substrate.

The protein belongs to the ChlB/BchB/BchZ family. As to quaternary structure, protochlorophyllide reductase is composed of three subunits; ChlL, ChlN and ChlB. Forms a heterotetramer of two ChlB and two ChlN subunits. Requires [4Fe-4S] cluster as cofactor.

Its subcellular location is the plastid. The protein localises to the chloroplast. The catalysed reaction is chlorophyllide a + oxidized 2[4Fe-4S]-[ferredoxin] + 2 ADP + 2 phosphate = protochlorophyllide a + reduced 2[4Fe-4S]-[ferredoxin] + 2 ATP + 2 H2O. It functions in the pathway porphyrin-containing compound metabolism; chlorophyll biosynthesis (light-independent). Functionally, component of the dark-operative protochlorophyllide reductase (DPOR) that uses Mg-ATP and reduced ferredoxin to reduce ring D of protochlorophyllide (Pchlide) to form chlorophyllide a (Chlide). This reaction is light-independent. The NB-protein (ChlN-ChlB) is the catalytic component of the complex. This Porphyra purpurea (Red seaweed) protein is Light-independent protochlorophyllide reductase subunit B.